Here is a 314-residue protein sequence, read N- to C-terminus: Dioxygenase easH (314 aa).

Fe cation is bound by residues His141, Asp143, and His217.

This sequence belongs to the PhyH family. As to quaternary structure, homodimer. Fe cation is required as a cofactor.

It participates in alkaloid biosynthesis; ergot alkaloid biosynthesis. Dioxygenase; part of the gene cluster that mediates the biosynthesis of fungal ergot alkaloid. DmaW catalyzes the first step of ergot alkaloid biosynthesis by condensing dimethylallyl diphosphate (DMAP) and tryptophan to form 4-dimethylallyl-L-tryptophan. The second step is catalyzed by the methyltransferase easF that methylates 4-dimethylallyl-L-tryptophan in the presence of S-adenosyl-L-methionine, resulting in the formation of 4-dimethylallyl-L-abrine. The catalase easC and the FAD-dependent oxidoreductase easE then transform 4-dimethylallyl-L-abrine to chanoclavine-I which is further oxidized by easD in the presence of NAD(+), resulting in the formation of chanoclavine-I aldehyde. Agroclavine dehydrogenase easG then mediates the conversion of chanoclavine-I aldehyde to agroclavine via a non-enzymatic adduct reaction: the substrate is an iminium intermediate that is formed spontaneously from chanoclavine-I aldehyde in the presence of glutathione. The presence of easA is not required to complete this reaction. Further conversion of agroclavine to paspalic acid is a two-step process involving oxidation of agroclavine to elymoclavine and of elymoclavine to paspalic acid, the second step being performed by the elymoclavine oxidase cloA. Paspalic acid is then further converted to D-lysergic acid. Ergopeptines are assembled from D-lysergic acid and three different amino acids by the D-lysergyl-peptide-synthetases composed each of a monomudular and a trimodular nonribosomal peptide synthetase subunit. LpsB and lpsC encode the monomodular subunits responsible for D-lysergic acid activation and incorporation into the ergopeptine backbone. LpsA1 and A2 subunits encode the trimodular nonribosomal peptide synthetase assembling the tripeptide portion of ergopeptines. LpsA1 is responsible for formation of the major ergopeptine, ergotamine, and lpsA2 for alpha-ergocryptine, the minor ergopeptine of the total alkaloid mixture elaborated by C.purpurea. D-lysergyl-tripeptides are assembled by the nonribosomal peptide synthetases and released as N-(D-lysergyl-aminoacyl)-lactams. Cyclolization of the D-lysergyl-tripeptides is performed by the Fe(2+)/2-ketoglutarate-dependent dioxygenase easH which introduces a hydroxyl group into N-(D-lysergyl-aminoacyl)-lactam at alpha-C of the aminoacyl residue followed by spontaneous condensation with the terminal lactam carbonyl group. This is Dioxygenase easH from Claviceps purpurea (strain 20.1) (Ergot fungus).